The primary structure comprises 67 residues: Beta-defensin 103A (67 aa).

A signal peptide spans 1–22; that stretch reads MRIHYLLFTLLFLFLVPVPGHG. Intrachain disulfides connect Cys33/Cys62, Cys40/Cys55, and Cys45/Cys63.

The protein belongs to the beta-defensin family.

The protein resides in the secreted. Exhibits antimicrobial activity against Gram-positive and Gram-negative bacteria. The chain is Beta-defensin 103A (DEFB103A) from Gorilla gorilla gorilla (Western lowland gorilla).